A 476-amino-acid polypeptide reads, in one-letter code: MKVTLPDFRRAGVLVVGDVMLDRYWYGPTSRISPEAPVPVVKVDTIEERPGGAANVAMNIASLGAVARLVGLTGIDDAARALICKLSEVRVRCDFVSVPTHPTITKLRVLSRNQQLIRLDFEEGFDGVDPTPIFERIQLALPQIGALVLSDYAKGALNSVQPMIQLARKANVPVLIDPKGSDFERYRGATLLTPNLSEFEAVVGRCKNEEELVNRGMQLVADFELSALLVTRSEQGMTLLQLGKPPLHLPTQAKEVFDVTGAGDTVIGVLAAALAAGNSLEESCFLANAAAGVVVGKLGTSTVSPIELENAIRGRAETGFGVMDEQQLKIAVAQARQRGEKVVMTNGIFDILHAGHVSYLANARKLGDRLIVAVNSDASTKRLKGEKRPVNPLEQRMVVLGALEAVDWVVPFEEDTPQRLIADILPDLLVKGGDYKPHEIAGSEEVWAAGGEVKVLNFEDGVSTTNIIQSIKNGRG.

A ribokinase region spans residues 1 to 318 (MKVTLPDFRR…ENAIRGRAET (318 aa)). 195–198 (NLSE) is a binding site for ATP. Aspartate 264 is an active-site residue. A cytidylyltransferase region spans residues 344–476 (MTNGIFDILH…IIQSIKNGRG (133 aa)).

In the N-terminal section; belongs to the carbohydrate kinase PfkB family. This sequence in the C-terminal section; belongs to the cytidylyltransferase family. Homodimer.

It catalyses the reaction D-glycero-beta-D-manno-heptose 7-phosphate + ATP = D-glycero-beta-D-manno-heptose 1,7-bisphosphate + ADP + H(+). It carries out the reaction D-glycero-beta-D-manno-heptose 1-phosphate + ATP + H(+) = ADP-D-glycero-beta-D-manno-heptose + diphosphate. It participates in nucleotide-sugar biosynthesis; ADP-L-glycero-beta-D-manno-heptose biosynthesis; ADP-L-glycero-beta-D-manno-heptose from D-glycero-beta-D-manno-heptose 7-phosphate: step 1/4. It functions in the pathway nucleotide-sugar biosynthesis; ADP-L-glycero-beta-D-manno-heptose biosynthesis; ADP-L-glycero-beta-D-manno-heptose from D-glycero-beta-D-manno-heptose 7-phosphate: step 3/4. Functionally, catalyzes the phosphorylation of D-glycero-D-manno-heptose 7-phosphate at the C-1 position to selectively form D-glycero-beta-D-manno-heptose-1,7-bisphosphate. Catalyzes the ADP transfer from ATP to D-glycero-beta-D-manno-heptose 1-phosphate, yielding ADP-D-glycero-beta-D-manno-heptose. This chain is Bifunctional protein HldE, found in Yersinia pseudotuberculosis serotype O:1b (strain IP 31758).